Here is a 347-residue protein sequence, read N- to C-terminus: Bombesin receptor-activated protein C6orf89 homolog (347 aa).

Residues 1-58 are Cytoplasmic-facing; sequence MDLAANEISIYDKLSETVDLVRQTGHQCGMSEKAIEKFIRQLLEKNEPQRPPPQYPLL. Residues 59-79 form a helical membrane-spanning segment; that stretch reads IVVYKVLATLGLILLTAYFVI. Residues 80–347 are Extracellular-facing; the sequence is QPFSPLAPEP…ICDGTAFSEL (268 aa).

In terms of assembly, homodimer. Interacts with BRS3. Interacts (via N-terminus) with SIN3B. Glycosylated.

Its subcellular location is the golgi apparatus membrane. The protein resides in the cytoplasm. In terms of biological role, exhibits histone deacetylase (HDAC) enhancer properties. May play a role in cell cycle progression and wound repair of bronchial epithelial cells. The chain is Bombesin receptor-activated protein C6orf89 homolog from Pongo abelii (Sumatran orangutan).